The primary structure comprises 325 residues: Putative carboxypeptidase YocD (325 aa).

Ser111 functions as the Nucleophile in the catalytic mechanism. Residues Glu228 and His296 each act as charge relay system in the active site.

Belongs to the peptidase S66 family.

The sequence is that of Putative carboxypeptidase YocD (yocD) from Bacillus subtilis (strain 168).